The sequence spans 218 residues: 3-phospho-D-glycerate guanylyltransferase (218 aa).

Belongs to the CofC family.

It carries out the reaction (2R)-3-phosphoglycerate + GTP + H(+) = 3-[(R)-glyceryl]-diphospho-5'-guanosine + diphosphate. It participates in cofactor biosynthesis; coenzyme F420 biosynthesis. Functionally, guanylyltransferase that catalyzes the activation of (2R)-3-phosphoglycerate (3PG) as 3-[(R)-glyceryl]-diphospho-5'-guanosine, via the condensation of 3PG with GTP. It is involved in the biosynthesis of a derivative of the hydride carrier cofactor coenzyme F420, 3PG-F420. The protein is 3-phospho-D-glycerate guanylyltransferase of Phenylobacterium zucineum (strain HLK1).